The chain runs to 212 residues: Probable dual specificity protein phosphatase DDB_G0269404 (212 aa).

The region spanning 30 to 169 (FDAQEVIPNL…LINYEATILK (140 aa)) is the Tyrosine-protein phosphatase domain. C113 (phosphocysteine intermediate) is an active-site residue.

This sequence belongs to the protein-tyrosine phosphatase family. Non-receptor class dual specificity subfamily.

The catalysed reaction is O-phospho-L-tyrosyl-[protein] + H2O = L-tyrosyl-[protein] + phosphate. It carries out the reaction O-phospho-L-seryl-[protein] + H2O = L-seryl-[protein] + phosphate. It catalyses the reaction O-phospho-L-threonyl-[protein] + H2O = L-threonyl-[protein] + phosphate. Functionally, has a dual specificity toward Ser/Thr and Tyr-containing proteins. This is Probable dual specificity protein phosphatase DDB_G0269404 from Dictyostelium discoideum (Social amoeba).